Here is a 378-residue protein sequence, read N- to C-terminus: Chaperone protein DnaJ (378 aa).

The J domain occupies 5–72 (DFYEVLGVPK…QKRAAYDQFG (68 aa)). The CR-type zinc finger occupies 138–216 (GKEAQIRIPS…CHGQGKVKKQ (79 aa)). Positions 151, 154, 168, 171, 190, 193, 204, and 207 each coordinate Zn(2+). CXXCXGXG motif repeat units follow at residues 151 to 158 (CETCHGSG), 168 to 175 (CTTCSGTG), 190 to 197 (CPHCRGTG), and 204 to 211 (CVTCHGQG). The disordered stretch occupies residues 354 to 378 (SLKKGGGKHSPSGESWTDRLKNLFT). The segment covering 369–378 (WTDRLKNLFT) has biased composition (basic and acidic residues).

It belongs to the DnaJ family. In terms of assembly, homodimer. Zn(2+) serves as cofactor.

It localises to the cytoplasm. In terms of biological role, participates actively in the response to hyperosmotic and heat shock by preventing the aggregation of stress-denatured proteins and by disaggregating proteins, also in an autonomous, DnaK-independent fashion. Unfolded proteins bind initially to DnaJ; upon interaction with the DnaJ-bound protein, DnaK hydrolyzes its bound ATP, resulting in the formation of a stable complex. GrpE releases ADP from DnaK; ATP binding to DnaK triggers the release of the substrate protein, thus completing the reaction cycle. Several rounds of ATP-dependent interactions between DnaJ, DnaK and GrpE are required for fully efficient folding. Also involved, together with DnaK and GrpE, in the DNA replication of plasmids through activation of initiation proteins. In Paracidovorax citrulli (strain AAC00-1) (Acidovorax citrulli), this protein is Chaperone protein DnaJ.